Consider the following 1125-residue polypeptide: Exportin-6 (1125 aa).

An N-acetylalanine modification is found at A2. The Importin N-terminal domain occupies 31–97 (IEELLNNFAQ…RSCLPKLLLA (67 aa)). Phosphoserine is present on S199. Residues T201 and T204 each carry the phosphothreonine modification. S208 and S224 each carry phosphoserine.

This sequence belongs to the exportin family. In terms of assembly, found in a complex with XPO6, Ran, ACTB and PFN1. Interacts with ACTB. Interacts with ACTB in a RanGTP-dependent manner.

Its subcellular location is the nucleus. The protein resides in the cytoplasm. Mediates the nuclear export of actin and profilin-actin complexes in somatic cells. This chain is Exportin-6 (XPO6), found in Homo sapiens (Human).